A 332-amino-acid polypeptide reads, in one-letter code: MATLKDQLIQNLLKEEHVPQNKITIVGVGAVGMACAISILMKDLADEVALVDVMEDKLKGEMMDLQHGSLFLRTPKIVSGKDYNVTANSRLVIITAGARQQEGESRLNLVQRNVNIFKFIIPNIVKYSPNCKLLVVSNPVDILTYVAWKISGFPKNRVIGSGCNLDSARFRYLMGERLGVHPLSCHGWILGEHGDSSVPVWSGVNVAGVSLKNLHPELGTDADKEQWKAVHKQVVDSAYEVIKLKGYTSWAIGLSVVDLAESIMKNLRRVHPISTMIKGLYGIKEDVFLSVPCILGQNGISDVVKVTLTHEEEAYLKKSADTLWGIQKELQF.

Ala2 is subject to N-acetylalanine. Lys5 is subject to N6-acetyllysine; alternate. Residue Lys5 is modified to N6-succinyllysine; alternate. Lys14 bears the N6-acetyllysine mark. Position 29–57 (29–57 (GAVGMACAISILMKDLADEVALVDVMEDK)) interacts with NAD(+). Position 57 is an N6-acetyllysine; alternate (Lys57). A Glycyl lysine isopeptide (Lys-Gly) (interchain with G-Cter in SUMO2); alternate cross-link involves residue Lys57. Lys81 bears the N6-acetyllysine mark. Substrate is bound at residue Arg106. Lys118 carries the N6-acetyllysine; alternate modification. N6-succinyllysine; alternate is present on Lys118. Residue Lys126 is modified to N6-acetyllysine. Residue Asn138 coordinates NAD(+). The substrate site is built by Asn138 and Arg169. Catalysis depends on His193, which acts as the Proton acceptor. Lys224 and Lys232 each carry N6-acetyllysine. Tyr239 carries the post-translational modification Phosphotyrosine. Position 243 is an N6-acetyllysine (Lys243). Thr248 is a binding site for substrate. Thr309 is modified (phosphothreonine). An N6-acetyllysine; alternate modification is found at Lys318. Lys318 bears the N6-succinyllysine; alternate mark. Thr322 is subject to Phosphothreonine.

Belongs to the LDH/MDH superfamily. LDH family. Homotetramer. Interacts with PTEN upstream reading frame protein MP31. In terms of processing, ISGylated.

Its subcellular location is the cytoplasm. The enzyme catalyses (S)-lactate + NAD(+) = pyruvate + NADH + H(+). It functions in the pathway fermentation; pyruvate fermentation to lactate; (S)-lactate from pyruvate: step 1/1. Interconverts simultaneously and stereospecifically pyruvate and lactate with concomitant interconversion of NADH and NAD(+). The polypeptide is L-lactate dehydrogenase A chain (LDHA) (Bos mutus grunniens (Wild yak)).